A 68-amino-acid chain; its full sequence is Conotoxin Lt5.11 (68 aa).

The first 19 residues, 1–19, serve as a signal peptide directing secretion; sequence MLCLPVFIILLLLASPAAP. A propeptide spanning residues 20-54 is cleaved from the precursor; that stretch reads KSLETRIQNDLIRAGLTDADLKTEKGFLSGLLNVA.

The protein belongs to the conotoxin T superfamily. In terms of processing, contains 2 disulfide bonds that can be either 'C1-C3, C2-C4' or 'C1-C4, C2-C3', since these disulfide connectivities have been observed for conotoxins with cysteine framework V (for examples, see AC P0DQQ7 and AC P81755). Expressed by the venom duct.

The protein resides in the secreted. This chain is Conotoxin Lt5.11, found in Conus litteratus (Lettered cone).